A 325-amino-acid polypeptide reads, in one-letter code: Glutarate 2-hydroxylase (325 aa).

Residues His-160, Asp-162, and His-292 each coordinate Fe cation.

It belongs to the glutarate hydroxylase family. In terms of assembly, homotetramer. Fe(2+) is required as a cofactor.

It catalyses the reaction glutarate + 2-oxoglutarate + O2 = (S)-2-hydroxyglutarate + succinate + CO2. It participates in amino-acid degradation. Its function is as follows. Acts as an alpha-ketoglutarate-dependent dioxygenase catalyzing hydroxylation of glutarate (GA) to L-2-hydroxyglutarate (L2HG). Functions in a L-lysine degradation pathway that proceeds via cadaverine, glutarate and L-2-hydroxyglutarate. This is Glutarate 2-hydroxylase from Citrobacter koseri (strain ATCC BAA-895 / CDC 4225-83 / SGSC4696).